A 192-amino-acid polypeptide reads, in one-letter code: Mitochondrial import inner membrane translocase subunit Tim22 (192 aa).

Disulfide bonds link C67–C139 and C158–C177. 3 helical membrane-spanning segments follow: residues 72 to 92 (VLAC…TAGI), 123 to 141 (YAKN…ECLV), and 168 to 188 (AGVK…AAID).

The protein belongs to the Tim17/Tim22/Tim23 family. As to quaternary structure, component of the TIM22 complex, whose core is composed of TIMM22, associated with peripheral protein FXC1/TIMM10B and the 70 kDa heterohexamer. In most cases, the 70 kDa complex is composed of TIMM9 and TIMM10 (TIMM10A or TIMM10B). A small fraction of the 70 kDa complex is composed of TIMM8 (TIMM8A/DDP1 or TIMM8B/DDP2) and TIMM13. The TIM22 complex also contains AGK and TIMM29. Interacts directly with TIMM9, TIMM10A and FXC1/TIMM10B. Interacts (when oxidized) with TIMM29; interaction is direct. Post-translationally, disulfide bonds promote efficient assembly of the TIM22 complex.

It localises to the mitochondrion inner membrane. In terms of biological role, essential core component of the TIM22 complex, a complex that mediates the import and insertion of multi-pass transmembrane proteins into the mitochondrial inner membrane. In the TIM22 complex, it constitutes the voltage-activated and signal-gated channel. Forms a twin-pore translocase that uses the membrane potential as external driving force in 2 voltage-dependent steps. The polypeptide is Mitochondrial import inner membrane translocase subunit Tim22 (Timm22) (Rattus norvegicus (Rat)).